Here is a 531-residue protein sequence, read N- to C-terminus: Transmembrane protein 266 (531 aa).

The Cytoplasmic segment spans residues 1–102 (MALAASFNMT…VFLLSASLNS (102 aa)). A helical membrane pass occupies residues 103–123 (FLVACVILVVILLTLELLIDI). Over 124–129 (KLLQFS) the chain is Extracellular. The chain crosses the membrane as a helical span at residues 130 to 150 (SAFQFAGVIHWISLVILSVFF). At 151–169 (SETVLRIVVLGIWDYIENK) the chain is on the cytoplasmic side. A helical transmembrane segment spans residues 170–190 (IEVFDGAVIILSLAPMVASTV). Residues 191–199 (ANGPRSPWD) lie on the Extracellular side of the membrane. Residues 200–220 (AISLIIMLRIWRVKRVIDAYV) form a helical membrane-spanning segment. Residues 221 to 531 (LPVKLEMEMV…EQKLHRVPEA (311 aa)) are Cytoplasmic-facing. A coiled-coil region spans residues 231–251 (IQQYEKAKVIQDEQLERLTQI). Positions 380 to 477 (NGTGATSESA…PAGSAQTSPE (98 aa)) are disordered. Positions 383–412 (GATSESASRSSVTRAQSDSSQTLGSSTDCS) are enriched in polar residues. Pro residues predominate over residues 421–431 (EPGPSPLPLPP).

As to quaternary structure, homodimer; disulfide-linked.

The protein localises to the cell membrane. Its subcellular location is the cell projection. It is found in the dendrite. It localises to the perikaryon. In terms of biological role, voltage-sensor protein present on the post-synaptic side of glutamatergic mossy fibers and granule cells in the cerebellum. Despite the presence of a voltage-sensor segment, does not form a functional ion channel and its precise role remains unclear. Undergoes both rapid and slow structural rearrangements in response to changes in voltage. Contains a zinc-binding site that can regulate the slow conformational transition. In Macaca fascicularis (Crab-eating macaque), this protein is Transmembrane protein 266.